Here is a 404-residue protein sequence, read N- to C-terminus: Cytochrome b (404 aa).

Transmembrane regions (helical) follow at residues 35 to 55 (FGSLAGLCLVIQILTGVFLAM), 79 to 101 (WLLRYMHANGASMFFIVVYLHFF), 116 to 136 (VWCLGVVILLLMIVTAFIGYV), and 182 to 202 (FFSLHYLLPFIIAGASILHLA). 2 residues coordinate heme b: H85 and H99. Residues H186 and H200 each contribute to the heme b site. H205 is a binding site for a ubiquinone. The next 4 helical transmembrane spans lie at 228–248 (IYVKDLVGWVAFAIFFSIFVF), 292–312 (LGGVAAIGLVFVSLLALPFIN), 324–344 (IHQKFFWLLVADCLLLGWIGC), and 351–370 (YVTIGQIASVGFFFYFAITP).

Belongs to the cytochrome b family. The main subunits of complex b-c1 are: cytochrome b, cytochrome c1 and the Rieske protein. It depends on heme b as a cofactor.

The protein resides in the mitochondrion inner membrane. Its function is as follows. Component of the ubiquinol-cytochrome c reductase complex (complex III or cytochrome b-c1 complex) that is part of the mitochondrial respiratory chain. The b-c1 complex mediates electron transfer from ubiquinol to cytochrome c. Contributes to the generation of a proton gradient across the mitochondrial membrane that is then used for ATP synthesis. The sequence is that of Cytochrome b (MT-CYB) from Marchantia polymorpha (Common liverwort).